Here is a 130-residue protein sequence, read N- to C-terminus: S-protein homolog 32 (130 aa).

Residues 1 to 21 (MKYFTIFVFVFSLCMLGHVSG) form the signal peptide.

This sequence belongs to the plant self-incompatibility (S1) protein family.

Its subcellular location is the secreted. This chain is S-protein homolog 32, found in Arabidopsis thaliana (Mouse-ear cress).